Here is a 354-residue protein sequence, read N- to C-terminus: UDP-N-acetylglucosamine--N-acetylmuramyl-(pentapeptide) pyrophosphoryl-undecaprenol N-acetylglucosamine transferase (354 aa).

Residues 11–13, R164, S194, and Q289 contribute to the UDP-N-acetyl-alpha-D-glucosamine site; that span reads SAG.

It belongs to the glycosyltransferase 28 family. MurG subfamily.

It is found in the cell membrane. The catalysed reaction is di-trans,octa-cis-undecaprenyl diphospho-N-acetyl-alpha-D-muramoyl-L-alanyl-D-glutamyl-meso-2,6-diaminopimeloyl-D-alanyl-D-alanine + UDP-N-acetyl-alpha-D-glucosamine = di-trans,octa-cis-undecaprenyl diphospho-[N-acetyl-alpha-D-glucosaminyl-(1-&gt;4)]-N-acetyl-alpha-D-muramoyl-L-alanyl-D-glutamyl-meso-2,6-diaminopimeloyl-D-alanyl-D-alanine + UDP + H(+). It functions in the pathway cell wall biogenesis; peptidoglycan biosynthesis. Cell wall formation. Catalyzes the transfer of a GlcNAc subunit on undecaprenyl-pyrophosphoryl-MurNAc-pentapeptide (lipid intermediate I) to form undecaprenyl-pyrophosphoryl-MurNAc-(pentapeptide)GlcNAc (lipid intermediate II). The sequence is that of UDP-N-acetylglucosamine--N-acetylmuramyl-(pentapeptide) pyrophosphoryl-undecaprenol N-acetylglucosamine transferase from Shouchella clausii (strain KSM-K16) (Alkalihalobacillus clausii).